The sequence spans 345 residues: MKEFDLESYDYDLPKELIANYPILPKEKAKLLVYERRSQKITHTTFEHVLDFFPKNALVVLNDTKVIKARIFGSKHAFLPSKTTEVFFHRFFKDNTALTQIKGKIKVGDKIFFDAHYHAEVLELLHNGQRLIAFYGNKTPLNQANILKLLEQYGHMPLPPYIKRADESLDAHEYQSVFAKHMGAVAAPTASLHFSQNTLEKLLKDFKHAFLTLHVGAGTFLGVETKDIREHQIHTEVLRIPKKSQEILQKSQEILCIGTTALRSVEYFKRLENPNQEAFECDIFLHLANPILHVNYLLTNFHLPKSSLLMLVSAMVGLEKTKEIYQIAIEKKYRFYSYGDGMLIL.

This sequence belongs to the QueA family. In terms of assembly, monomer.

The protein resides in the cytoplasm. The enzyme catalyses 7-aminomethyl-7-carbaguanosine(34) in tRNA + S-adenosyl-L-methionine = epoxyqueuosine(34) in tRNA + adenine + L-methionine + 2 H(+). It functions in the pathway tRNA modification; tRNA-queuosine biosynthesis. Transfers and isomerizes the ribose moiety from AdoMet to the 7-aminomethyl group of 7-deazaguanine (preQ1-tRNA) to give epoxyqueuosine (oQ-tRNA). In Helicobacter pylori (strain Shi470), this protein is S-adenosylmethionine:tRNA ribosyltransferase-isomerase.